The chain runs to 668 residues: MSIEQTLDELKQQLNYHAYRYYVEDSPELPDAEYDRMMQQLLSIESEHPELVTVDSPSQRVGGEALDGFTQIQHEIPMLSLDNAFSDEELEAFEKRMNDRLISKPVSLFCCEPKLDGLAVSLLYVDGKLVQAGTRGDGTTGENITENVRTIRCIPLTLQGEGWPTRLEVRGEVFMPKAGFEALNERALKRGEKPFANPRNAAAGSLRQLDSKITATRPLSFYAYSVGVIEGGELETSHYQRFVQLKSWGLPMCEETKQCHSLTEVKAYYKDILERRDALKYEIDGVVIKVDDIALQEQLGFVARAPRWAIAYKFPAQEELTVLNDVEFQVGRTGAITPVAKLEPVFVGGVTVSNATLHNADEIARLGVHIGDTVIIRRAGDVIPQIVSVVEARRPTDSKAIVYPIHCPVCGSNLERVEGEAVTRCGAGLVCQAQRKEALKHFVSRKALDVDGLGDKVVEQLVDKEMVETPADLFKLSAGLLTVLERMGPKSAQNVVDALNKAKATTLPRFLYSLGIREVGEATAANLAAHFYTLEAIQVATFEQLIEVSDVGDIVAKHVLNFFAEPHNKTVIEDLQEMGIHWPEIKALDESVPQPLAGKVVVLTGTLHKLKRNEAKAALQELGAKVTGSVSKKTDILFAGEAAGSKLAKAEELGVEVMNEEQLIELLN.

NAD(+) is bound by residues 31–35 (DAEYD), 80–81 (SL), and Glu-112. Lys-114 functions as the N6-AMP-lysine intermediate in the catalytic mechanism. The NAD(+) site is built by Arg-135, Glu-172, Lys-289, and Lys-313. The Zn(2+) site is built by Cys-407, Cys-410, Cys-425, and Cys-431. In terms of domain architecture, BRCT spans 591–668 (SVPQPLAGKV…NEEQLIELLN (78 aa)).

This sequence belongs to the NAD-dependent DNA ligase family. LigA subfamily. It depends on Mg(2+) as a cofactor. Requires Mn(2+) as cofactor.

It carries out the reaction NAD(+) + (deoxyribonucleotide)n-3'-hydroxyl + 5'-phospho-(deoxyribonucleotide)m = (deoxyribonucleotide)n+m + AMP + beta-nicotinamide D-nucleotide.. In terms of biological role, DNA ligase that catalyzes the formation of phosphodiester linkages between 5'-phosphoryl and 3'-hydroxyl groups in double-stranded DNA using NAD as a coenzyme and as the energy source for the reaction. It is essential for DNA replication and repair of damaged DNA. This is DNA ligase from Aliivibrio fischeri (strain ATCC 700601 / ES114) (Vibrio fischeri).